The primary structure comprises 178 residues: UPF0114 protein in repA1-repA2 intergenic region (178 aa).

3 helical membrane passes run 14–34, 53–73, and 136–156; these read WLIFPIYLGLSFCLILLTLKF, LILVILSLIDIVLVGGLLVMV, and WYVIIHLTFVVSAGGMAYIDR.

This sequence belongs to the UPF0114 family.

The protein localises to the cell membrane. The sequence is that of UPF0114 protein in repA1-repA2 intergenic region from Buchnera aphidicola subsp. Tetraneura caerulescens.